Here is a 518-residue protein sequence, read N- to C-terminus: 2-isopropylmalate synthase (518 aa).

The Pyruvate carboxyltransferase domain occupies 5 to 267 (VIIFDTTLRD…STNIKHKEIY (263 aa)). Mn(2+)-binding residues include Asp-14, His-202, His-204, and Asn-238. The interval 392–518 (SLSFFSVQSI…KLKTLKKVNN (127 aa)) is regulatory domain.

It belongs to the alpha-IPM synthase/homocitrate synthase family. LeuA type 1 subfamily. Homodimer. The cofactor is Mn(2+).

The protein resides in the cytoplasm. The enzyme catalyses 3-methyl-2-oxobutanoate + acetyl-CoA + H2O = (2S)-2-isopropylmalate + CoA + H(+). It participates in amino-acid biosynthesis; L-leucine biosynthesis; L-leucine from 3-methyl-2-oxobutanoate: step 1/4. Its function is as follows. Catalyzes the condensation of the acetyl group of acetyl-CoA with 3-methyl-2-oxobutanoate (2-ketoisovalerate) to form 3-carboxy-3-hydroxy-4-methylpentanoate (2-isopropylmalate). This is 2-isopropylmalate synthase from Buchnera aphidicola subsp. Schizaphis graminum (strain Sg).